The primary structure comprises 416 residues: Tyrosine--tRNA ligase (416 aa).

Tyr37 is a binding site for L-tyrosine. A 'HIGH' region motif is present at residues 42–51 (PTADSLHVGN). Residues Tyr176 and Gln180 each coordinate L-tyrosine. The short motif at 236 to 240 (KMGKS) is the 'KMSKS' region element. Residue Lys239 coordinates ATP. The S4 RNA-binding domain occupies 350-416 (LPAFRVFQEA…KKKHILLRPV (67 aa)).

Belongs to the class-I aminoacyl-tRNA synthetase family. TyrS type 1 subfamily. In terms of assembly, homodimer.

It is found in the cytoplasm. It catalyses the reaction tRNA(Tyr) + L-tyrosine + ATP = L-tyrosyl-tRNA(Tyr) + AMP + diphosphate + H(+). Its function is as follows. Catalyzes the attachment of tyrosine to tRNA(Tyr) in a two-step reaction: tyrosine is first activated by ATP to form Tyr-AMP and then transferred to the acceptor end of tRNA(Tyr). This is Tyrosine--tRNA ligase from Gluconobacter oxydans (strain 621H) (Gluconobacter suboxydans).